The sequence spans 387 residues: Acetylornithine aminotransferase (387 aa).

Residues 97–98 and F130 each bind pyridoxal 5'-phosphate; that span reads GT. Residue R133 coordinates N(2)-acetyl-L-ornithine. A pyridoxal 5'-phosphate-binding site is contributed by 215–218; the sequence is DEVQ. K244 carries the post-translational modification N6-(pyridoxal phosphate)lysine. T273 serves as a coordination point for pyridoxal 5'-phosphate.

This sequence belongs to the class-III pyridoxal-phosphate-dependent aminotransferase family. ArgD subfamily. As to quaternary structure, homodimer. Requires pyridoxal 5'-phosphate as cofactor.

It localises to the cytoplasm. It catalyses the reaction N(2)-acetyl-L-ornithine + 2-oxoglutarate = N-acetyl-L-glutamate 5-semialdehyde + L-glutamate. It functions in the pathway amino-acid biosynthesis; L-arginine biosynthesis; N(2)-acetyl-L-ornithine from L-glutamate: step 4/4. The chain is Acetylornithine aminotransferase from Clostridium acetobutylicum (strain ATCC 824 / DSM 792 / JCM 1419 / IAM 19013 / LMG 5710 / NBRC 13948 / NRRL B-527 / VKM B-1787 / 2291 / W).